Here is a 731-residue protein sequence, read N- to C-terminus: Actin filament-associated protein 1 (731 aa).

The residue at position 1 (Met-1) is an N-acetylmethionine. Residues 46–90 are disordered; that stretch reads VKDHAQKAETNNLPAPPQMPLPEIPQPWLPPDSGPPPLPTSSLPE. The span at 59 to 84 shows a compositional bias: pro residues; that stretch reads PAPPQMPLPEIPQPWLPPDSGPPPLP. An SH3-binding motif is present at residues 70–73; sequence PQPW. Residues 93–96 carry the SH2-binding 1 motif; the sequence is YEEA. Positions 118 to 138 are disordered; that stretch reads GSSYESYDEEEEDGKGKKTQH. Residues 152-248 form the PH 1 domain; the sequence is DAKICAFLLR…WLKVIKEAYS (97 aa). A disordered region spans residues 252 to 318; it reads GPVDPECSPP…SKSEAKGTVS (67 aa). Residues 271–284 show a composition bias toward basic and acidic residues; the sequence is AELEKKLSSERPSS. A phosphoserine mark is found at Ser-283 and Ser-284. A PH 2 domain is found at 348–442; the sequence is DVPTCGYLNV…WIGILLAETG (95 aa). Positions 452–457 match the SH2-binding 2 motif; sequence YDYIDV. The segment at 511–550 is disordered; sequence SLKNKKPPASSNGLPVKGRAPSSQQKKVESAGGVKRTASN. Ser-549 is modified (phosphoserine). Residues 558 to 649 are a coiled coil; that stretch reads KNRVEADAKR…VKESLKKALA (92 aa). The tract at residues 595-638 is interaction with F-actin; it reads DLRAAIEVNAGRKTQVALEDKLKRLEEECKQREAERVSLELELT. Positions 657 to 731 are disordered; sequence AIEPKSGTSS…AREWELKNGT (75 aa). Phosphoserine occurs at positions 665, 666, and 669. Phosphothreonine is present on Thr-676. Residues 678 to 687 show a composition bias toward polar residues; that stretch reads ENSPISSCDT. 2 positions are modified to phosphoserine: Ser-680 and Ser-688. The span at 721-731 shows a compositional bias: basic and acidic residues; it reads KAREWELKNGT.

As to quaternary structure, monomer and homomultimer. Interacts via its C-terminus with F-actin; probably involving AFAP1 multimers. Interacts with activated SRC SH3-SH2 domains. Interacts via its PH 1 domain with PRKCA, PRKCB and PRKCI. Post-translationally, phosphorylated on tyrosine residues. In terms of tissue distribution, widely expressed with highest levels in brain.

Its subcellular location is the cytoplasm. The protein resides in the cytoskeleton. It is found in the stress fiber. Can cross-link actin filaments into both network and bundle structures. May modulate changes in actin filament integrity and induce lamellipodia formation. May function as an adapter molecule that links other proteins, such as SRC and PKC to the actin cytoskeleton. This chain is Actin filament-associated protein 1 (Afap1), found in Rattus norvegicus (Rat).